The sequence spans 136 residues: uncharacterized protein (136 aa).

The protein localises to the cytoplasm. It localises to the nucleus. This is an uncharacterized protein from Schizosaccharomyces pombe (strain 972 / ATCC 24843) (Fission yeast).